The chain runs to 261 residues: tRNA (guanine-N(1)-)-methyltransferase (261 aa).

S-adenosyl-L-methionine-binding positions include Gly113 and 133-138 (IGDYVL).

This sequence belongs to the RNA methyltransferase TrmD family. Homodimer.

It localises to the cytoplasm. It catalyses the reaction guanosine(37) in tRNA + S-adenosyl-L-methionine = N(1)-methylguanosine(37) in tRNA + S-adenosyl-L-homocysteine + H(+). Functionally, specifically methylates guanosine-37 in various tRNAs. This Xylella fastidiosa (strain M23) protein is tRNA (guanine-N(1)-)-methyltransferase.